The following is a 475-amino-acid chain: Ankyrin repeat, SAM and basic leucine zipper domain-containing protein 1 (475 aa).

The interval 1–24 (MAGSLGNLVVAGGGESSDSEEDYW) is disordered. 3 positions are modified to phosphoserine: Ser-16, Ser-17, and Ser-19. 6 ANK repeats span residues 44 to 73 (ERDE…SVES), 77 to 106 (FGWT…NASF), 109 to 146 (DQYT…VACR), 147 to 176 (KCMT…EINA), 180 to 209 (NGYT…NKTI), and 213 to 242 (DGKT…PLQG). The region spanning 273–336 (TAFGDLEVFL…LDAVKELQVE (64 aa)) is the SAM domain.

In terms of assembly, interacts with DDX4, PIWIL1, RANBP9 and TDRD1.

It is found in the cytoplasm. Functionally, plays a central role during spermatogenesis by repressing transposable elements and preventing their mobilization, which is essential for the germline integrity. Acts via the piRNA metabolic process, which mediates the repression of transposable elements during meiosis by forming complexes composed of piRNAs and Piwi proteins and governs the methylation and subsequent repression of transposons. Its association with pi-bodies suggests a participation in the primary piRNAs metabolic process. Required prior to the pachytene stage to facilitate the production of multiple types of piRNAs, including those associated with repeats involved in the regulation of retrotransposons. May act by mediating protein-protein interactions during germ cell maturation. This Notamacropus eugenii (Tammar wallaby) protein is Ankyrin repeat, SAM and basic leucine zipper domain-containing protein 1 (ASZ1).